The sequence spans 173 residues: Shikimate kinase 2 (173 aa).

12-17 (GCGKTT) is an ATP binding site. Thr-16 and Asp-32 together coordinate Mg(2+). Asp-34, Arg-58, and Gly-79 together coordinate substrate. Residues 112 to 126 (EENPQDNQRPTLTGR) form an LID domain region. ATP is bound at residue Arg-120. Arg-139 is a binding site for substrate. Position 155 (Gln-155) interacts with ATP.

The protein belongs to the shikimate kinase family. AroL subfamily. Monomer. It depends on Mg(2+) as a cofactor.

It is found in the cytoplasm. The enzyme catalyses shikimate + ATP = 3-phosphoshikimate + ADP + H(+). The protein operates within metabolic intermediate biosynthesis; chorismate biosynthesis; chorismate from D-erythrose 4-phosphate and phosphoenolpyruvate: step 5/7. In terms of biological role, catalyzes the specific phosphorylation of the 3-hydroxyl group of shikimic acid using ATP as a cosubstrate. The protein is Shikimate kinase 2 of Pectobacterium carotovorum subsp. carotovorum (strain PC1).